Reading from the N-terminus, the 75-residue chain is Pi-hexatoxin-Hi1a (75 aa).

6 disulfide bridges follow: C3-C18, C10-C23, C17-C33, C40-C55, C47-C60, and C54-C71. Domain repeat units lie at residues 3 to 33 (CIRK…FEVC) and 40 to 71 (CLVK…SSVC). Positions 3-71 (CIRKWLSCVD…KRSGNKSSVC (69 aa)) are 2 X approximate repeats with cysteine pattern C-C-CC-C-C.

It belongs to the psalmotoxin-1 family. Double-knot toxin subfamily. As to expression, expressed by the venom gland.

It localises to the secreted. This toxin potently and selectively inhibits ASIC1a (IC(50)=0.4 nM on rASIC1a and IC(50)=0.52 nM on hASIC1a), an isoform of the gene ASIC1. It incompletely inhibits ASIC1a activation in a pH-independent and slowly reversible manner (Tau(off)=14.2 minutes for rASIC1a and 31.8 minutes for hASIC1a). This toxin acts by binding to and stabilizing the closed state of the channel, thereby impeding the transition into a conducting state. This toxin may bind to the acidic pocket of ASIC1a, since mutation of a key residue of this pocket (Arg-350) abolishes the ability of the toxin to inhibit ASIC1a. In addition, it shows antiparasitic activities, since it moderately inhibits the larval development of the major pathogenic nematode of ruminants (H.contortus, IC(50)=22.9 uM). In vivo, this toxin protects the brain from neuronal injury when administered up to 8 hours after stroke onset. The protein is Pi-hexatoxin-Hi1a of Hadronyche infensa (Fraser island funnel-web spider).